The sequence spans 184 residues: Elongation factor P (184 aa).

Belongs to the elongation factor P family.

The protein localises to the cytoplasm. Its pathway is protein biosynthesis; polypeptide chain elongation. In terms of biological role, involved in peptide bond synthesis. Stimulates efficient translation and peptide-bond synthesis on native or reconstituted 70S ribosomes in vitro. Probably functions indirectly by altering the affinity of the ribosome for aminoacyl-tRNA, thus increasing their reactivity as acceptors for peptidyl transferase. The polypeptide is Elongation factor P (Verminephrobacter eiseniae (strain EF01-2)).